We begin with the raw amino-acid sequence, 149 residues long: Oligosaccharyltransferase complex subunit OSTC (149 aa).

Residues Met1 to Thr32 lie on the Cytoplasmic side of the membrane. The chain crosses the membrane as a helical span at residues Val33–Ile53. Residues Val54–Tyr83 are Extracellular-facing. Residues Ile84–Leu104 traverse the membrane as a helical segment. Topologically, residues Asp105–Arg117 are cytoplasmic. The helical transmembrane segment at Phe118 to Phe138 threads the bilayer. Residues Met139–Gly149 lie on the Extracellular side of the membrane.

Belongs to the OSTC family. In terms of assembly, component of STT3A-containing oligosaccharyl transferase (OST-A) complex. STT3A-containing complex assembly occurs through the formation of 3 subcomplexes. Subcomplex 1 contains RPN1 and TMEM258, subcomplex 2 contains the STT3A-specific subunits STT3A, DC2/OSTC, and KCP2 as well as the core subunit OST4, and subcomplex 3 contains RPN2, DAD1, and OST48. The OST-A complex can form stable complexes with the Sec61 complex or with both the Sec61 and TRAP complexes. Interacts with PSEN1 and NCSTN; indicative for an association with the gamma-secretase complex.

The protein resides in the endoplasmic reticulum. It localises to the membrane. It functions in the pathway protein modification; protein glycosylation. In terms of biological role, subunit of STT3A-containing oligosaccharyl transferase (OST-A) complex that catalyzes the initial transfer of a defined glycan (Glc(3)Man(9)GlcNAc(2) in eukaryotes) from the lipid carrier dolichol-pyrophosphate to an asparagine residue within an Asn-X-Ser/Thr consensus motif in nascent polypeptide chains, the first step in protein N-glycosylation. N-glycosylation occurs cotranslationally and the complex associates with the Sec61 complex at the channel-forming translocon complex that mediates protein translocation across the endoplasmic reticulum (ER). Within the OST-A complex, acts as an adapter that anchors the OST-A complex to the Sec61 complex. May be involved in N-glycosylation of APP (amyloid-beta precursor protein). Can modulate gamma-secretase cleavage of APP by enhancing endoprotelysis of PSEN1. The protein is Oligosaccharyltransferase complex subunit OSTC of Bos taurus (Bovine).